The primary structure comprises 45 residues: Mu-conotoxin-like Cal 12.1.2c (45 aa).

Cystine bridges form between Cys3/Cys16, Cys11/Cys28, Cys18/Cys33, and Cys27/Cys39. 4-hydroxyproline is present on Pro23. A 6'-bromotryptophan mark is found at Trp37 and Trp38. 4-hydroxyproline is present on Pro40. 6'-bromotryptophan is present on Trp44.

As to expression, expressed by the venom duct.

Its subcellular location is the secreted. Functionally, mu-conotoxins block voltage-gated sodium channels. This toxin reversibly blocks voltage-gated sodium channel in cephalopods, with no alteration in the voltage dependence of sodium conductance or on the kinetics of inactivation. This is Mu-conotoxin-like Cal 12.1.2c from Californiconus californicus (California cone).